The chain runs to 226 residues: Small ribosomal subunit protein uS3 (226 aa).

Positions 39–109 (IYKFFDKFTR…KLDVNLKVLT (71 aa)) constitute a KH type-2 domain.

This sequence belongs to the universal ribosomal protein uS3 family. Part of the 30S ribosomal subunit. Forms a tight complex with proteins S10 and S14.

Binds the lower part of the 30S subunit head. Binds mRNA in the 70S ribosome, positioning it for translation. This is Small ribosomal subunit protein uS3 from Mycoplasmopsis synoviae (strain 53) (Mycoplasma synoviae).